Consider the following 101-residue polypeptide: uncharacterized protein (101 aa).

Transmembrane regions (helical) follow at residues 10 to 30 (VLAI…IGSI) and 67 to 87 (IILG…ILSI).

It is found in the membrane. This is an uncharacterized protein from Acanthamoeba polyphaga (Amoeba).